A 140-amino-acid polypeptide reads, in one-letter code: Nucleoside diphosphate kinase (140 aa).

Residues K11, F59, R87, T93, R104, and N114 each contribute to the ATP site. Catalysis depends on H117, which acts as the Pros-phosphohistidine intermediate.

The protein belongs to the NDK family. In terms of assembly, homotetramer. Mg(2+) is required as a cofactor.

Its subcellular location is the cytoplasm. The catalysed reaction is a 2'-deoxyribonucleoside 5'-diphosphate + ATP = a 2'-deoxyribonucleoside 5'-triphosphate + ADP. It catalyses the reaction a ribonucleoside 5'-diphosphate + ATP = a ribonucleoside 5'-triphosphate + ADP. Functionally, major role in the synthesis of nucleoside triphosphates other than ATP. The ATP gamma phosphate is transferred to the NDP beta phosphate via a ping-pong mechanism, using a phosphorylated active-site intermediate. The polypeptide is Nucleoside diphosphate kinase (Sinorhizobium fredii (strain NBRC 101917 / NGR234)).